We begin with the raw amino-acid sequence, 268 residues long: Single-stranded DNA-binding protein WHY3, chloroplastic (268 aa).

The transit peptide at 1 to 75 (MSQLLSSPPM…KQRFGDSSSS (75 aa)) directs the protein to the chloroplast. The interval 93–98 (KGKAAL) is required for ssDNA binding. The Nuclear localization signal motif lies at 171 to 185 (KGKGSDEGKVRKVLK).

It belongs to the Whirly family. As to quaternary structure, homotetramer.

It is found in the plastid. It localises to the chloroplast. The protein localises to the nucleus. Functionally, single-stranded DNA-binding protein that functions in both chloroplasts and nucleus. In chloroplasts, maintains plastid genome stability by preventing break-induced and short homology-dependent illegitimate recombinations. In the nucleus, is recruited to a distal element upstream of the kinesin KP1 to mediate the transcriptional repression of KP1. Can bind double-stranded DNA in vivo. The polypeptide is Single-stranded DNA-binding protein WHY3, chloroplastic (WHY3) (Arabidopsis thaliana (Mouse-ear cress)).